The sequence spans 949 residues: MTDSKYFTTTKKGEIFELKAELNSDKKEKKKEAVKKVIASMTVGKDVSALFPDVVNCMQTDNLELKKLVYLYLMNYAKSQPDMAIMAVNTFVKDCEDPNPLIRALAVRTMGCIRVDKITEYLCEPLRKCLKDEDPYVRKTAAVCVAKLHDINAQLVEDQGFLDTLKDLISDSNPMVVANRVAALSEIAESHPSSNLLDLKAQSINKLLTALNECTEWAQIFILDCLGNYMPKDDREAQSICERVTPRLSHANSAVVLSAVKVLMKFMEMLSKDLDYYATLLKKLAPPLVTLLSAEPEPQYVPLRNINLIVQKRPEILKHEMKVFFVKYNDPIYVKLEKLDIMIRLASQANIAQVLAELKEYATEVDVDFVRKAVRAIGRCAIKVEQSAERCVSTLLDLIQTKVNYVVQEAIVVIKDIFRKYPNKYESVIATLCENLDSLDEPEARAAMIWIVGEYAERIDNADELLESFLDGFHDESTQVQLQLLTAIVKLFLKKPTETQELVQQVLSLATQDSDNPDLRDRGYIYWRLLSTDPVAAKEVVLAEKPLISEETDLIEPTLLDELICYIGTLASVYHKPPNAFVEGGRGVVHKSLPPRTASSESTESPEAAPAGAPASDQPDVIPAQGDLLGDLLNLDLGPPVSGPPLAASSVQMGAVDLLGGGLDSLMGDEPEGIGDSNFGAPPASVAAAAPARLGAPVSSGLSDLFDLTSGVGTLSGSYVAPKAVWLPAMKAKGLEISGTFTRQVGSISMDLQLTNKALQVMTDFAIQFNRNSFGLAPAAPLQVHAPLSPNQTVEISLPLNTVGSVMKMEPLNNLQVAVKNNIDVFYFSTLYPLHVLFVEDGKMDRQMFLATWKDIPNENEAQFQIRDCPLNTEAASSKLQSSNIFTVAKRTVEGQDMLYQSLKLTNGIWVLAELRIQPGNPSFTLSLKCRAPEVSQHDIQAYETILKN.

At lysine 318 the chain carries N6-acetyllysine. A 3'-nitrotyrosine modification is found at tyrosine 574. The segment at 592 to 623 is disordered; sequence SLPPRTASSESTESPEAAPAGAPASDQPDVIP. Low complexity predominate over residues 594–616; that stretch reads PPRTASSESTESPEAAPAGAPAS.

Belongs to the adaptor complexes large subunit family. In terms of assembly, adaptor protein complex 1 (AP-1) is a heterotetramer composed of two large adaptins (gamma-type subunit AP1G1 and beta-type subunit AP1B1), a medium adaptin (mu-type subunit AP1M1 or AP1M2) and a small adaptin (sigma-type subunit AP1S1 or AP1S2 or AP1S3). In terms of processing, the N-terminus is blocked.

The protein resides in the golgi apparatus. The protein localises to the cytoplasmic vesicle. Its subcellular location is the clathrin-coated vesicle membrane. Subunit of clathrin-associated adaptor protein complex 1 that plays a role in protein sorting in the late-Golgi/trans-Golgi network (TGN) and/or endosomes. The AP complexes mediate both the recruitment of clathrin to membranes and the recognition of sorting signals within the cytosolic tails of transmembrane cargo molecules. In Rattus norvegicus (Rat), this protein is AP-1 complex subunit beta-1 (Ap1b1).